The chain runs to 469 residues: 2-oxoisovalerate dehydrogenase subunit beta, mitochondrial (469 aa).

Residues 1 to 40 constitute a mitochondrion transit peptide; the sequence is MKRSTVVIRPSARALSRQASSQSFLLARSSALTSRQRRLY. Tyr-167 contributes to the thiamine diphosphate binding site. The K(+) site is built by Gly-194, Leu-196, and Thr-197.

In terms of assembly, heterotetramer of 2 alpha and 2 beta chains. Requires thiamine diphosphate as cofactor.

The protein localises to the mitochondrion matrix. It carries out the reaction N(6)-[(R)-lipoyl]-L-lysyl-[protein] + 3-methyl-2-oxobutanoate + H(+) = N(6)-[(R)-S(8)-2-methylpropanoyldihydrolipoyl]-L-lysyl-[protein] + CO2. Functionally, the branched-chain alpha-keto dehydrogenase complex catalyzes the overall conversion of alpha-keto acids to acyl-CoA and CO(2). It contains multiple copies of three enzymatic components: branched-chain alpha-keto acid decarboxylase (E1), lipoamide acyltransferase (E2) and lipoamide dehydrogenase (E3). The polypeptide is 2-oxoisovalerate dehydrogenase subunit beta, mitochondrial (Chaetomium thermophilum (strain DSM 1495 / CBS 144.50 / IMI 039719) (Thermochaetoides thermophila)).